We begin with the raw amino-acid sequence, 331 residues long: 6-phosphogluconolactonase (331 aa).

The protein belongs to the cycloisomerase 2 family.

It carries out the reaction 6-phospho-D-glucono-1,5-lactone + H2O = 6-phospho-D-gluconate + H(+). It participates in carbohydrate degradation; pentose phosphate pathway; D-ribulose 5-phosphate from D-glucose 6-phosphate (oxidative stage): step 2/3. Functionally, catalyzes the hydrolysis of 6-phosphogluconolactone to 6-phosphogluconate. The chain is 6-phosphogluconolactonase from Salmonella paratyphi B (strain ATCC BAA-1250 / SPB7).